The following is a 602-amino-acid chain: Leucine-rich repeat-containing protein 40 (602 aa).

The disordered stretch occupies residues methionine 1–aspartate 22. Serine 71 bears the Phosphoserine mark. LRR repeat units follow at residues aspartate 83–leucine 104, alanine 106–leucine 127, asparagine 129–leucine 150, asparagine 152–phenylalanine 173, asparagine 175–leucine 196, serine 198–methionine 219, arginine 221–methionine 242, serine 244–serine 265, leucine 266–lysine 286, serine 290–leucine 311, serine 313–histidine 335, leucine 336–lysine 356, threonine 400–alanine 421, isoleucine 426–leucine 447, methionine 450–glutamine 472, lysine 473–leucine 494, arginine 496–isoleucine 517, threonine 519–methionine 540, asparagine 543–cysteine 564, and asparagine 566–methionine 586.

In Pongo abelii (Sumatran orangutan), this protein is Leucine-rich repeat-containing protein 40 (LRRC40).